A 153-amino-acid polypeptide reads, in one-letter code: Holo-[acyl-carrier-protein] synthase (153 aa).

Mg(2+) is bound by residues D24 and E78.

The protein belongs to the P-Pant transferase superfamily. AcpS family. Requires Mg(2+) as cofactor.

The protein resides in the cytoplasm. It catalyses the reaction apo-[ACP] + CoA = holo-[ACP] + adenosine 3',5'-bisphosphate + H(+). Functionally, transfers the 4'-phosphopantetheine moiety from coenzyme A to a Ser of acyl-carrier-protein. This chain is Holo-[acyl-carrier-protein] synthase, found in Bordetella parapertussis (strain 12822 / ATCC BAA-587 / NCTC 13253).